A 158-amino-acid chain; its full sequence is C-type lectin TsL (158 aa).

Residues 1–23 (MGRFIFVSFGLLVVFLSLSGAKG) form the signal peptide. The 135-residue stretch at 24-158 (SCCTNDSLPM…KNSFLCQCKF (135 aa)) folds into the C-type lectin domain. 4 cysteine pairs are disulfide-bonded: Cys-26–Cys-37, Cys-54–Cys-154, Cys-61–Cys-156, and Cys-129–Cys-146. Asn-28 carries an N-linked (GlcNAc...) (high mannose) asparagine glycan. Ca(2+)-binding residues include Gln-119, Asp-121, Glu-127, Asn-142, and Asp-143. The Galactose-binding signature appears at 119–121 (QPD).

This sequence belongs to the true venom lectin family. Homodimer; disulfide-linked. Expressed by the venom gland.

It localises to the secreted. Galactose-binding protein which recognizes specific carbohydrate structures and agglutinates a variety of animal cells by binding to cell-surface glycoproteins and glycolipids. May be a calcium-dependent lectin. This is C-type lectin TsL from Trimeresurus stejnegeri (Chinese green tree viper).